Reading from the N-terminus, the 297-residue chain is 4-hydroxy-tetrahydrodipicolinate synthase (297 aa).

Residue Thr-46 participates in pyruvate binding. Residue Tyr-134 is the Proton donor/acceptor of the active site. Lys-162 (schiff-base intermediate with substrate) is an active-site residue. Residue Ile-204 coordinates pyruvate.

This sequence belongs to the DapA family. Homotetramer; dimer of dimers.

The protein resides in the cytoplasm. The catalysed reaction is L-aspartate 4-semialdehyde + pyruvate = (2S,4S)-4-hydroxy-2,3,4,5-tetrahydrodipicolinate + H2O + H(+). It participates in amino-acid biosynthesis; L-lysine biosynthesis via DAP pathway; (S)-tetrahydrodipicolinate from L-aspartate: step 3/4. Functionally, catalyzes the condensation of (S)-aspartate-beta-semialdehyde [(S)-ASA] and pyruvate to 4-hydroxy-tetrahydrodipicolinate (HTPA). In Stenotrophomonas maltophilia (strain R551-3), this protein is 4-hydroxy-tetrahydrodipicolinate synthase.